A 175-amino-acid chain; its full sequence is MLLTISGLPGSGTTTVGKLLAEHYSVDIISAGDVFRGLAKERGVTLAEFGRLAESDPSIDVEIDKRQSDIANSSDNLILEGRLAGQMAKKALKIWIKAPLEVRVKRIVDREGSSFDVRMQETVEREASEALRYKEIHSIDIHDLSVYDLVIDSSRWDQFVITDMLKKAIDASGSF.

7–15 serves as a coordination point for ATP; it reads GLPGSGTTT.

Belongs to the cytidylate kinase family. Type 2 subfamily.

It is found in the cytoplasm. It catalyses the reaction CMP + ATP = CDP + ADP. The catalysed reaction is dCMP + ATP = dCDP + ADP. The protein is Cytidylate kinase of Methanococcoides burtonii (strain DSM 6242 / NBRC 107633 / OCM 468 / ACE-M).